Here is a 224-residue protein sequence, read N- to C-terminus: Coiled-coil domain-containing protein 43 (224 aa).

Lys-95 is covalently cross-linked (Glycyl lysine isopeptide (Lys-Gly) (interchain with G-Cter in SUMO1)). Coiled-coil stretches lie at residues 121-145 (SEEEKQRKAALLAQYADVTDEEDEA) and 177-218 (RKLE…KRTQ). Residues 138–149 (VTDEEDEADEKD) are compositionally biased toward acidic residues. Disordered stretches follow at residues 138-157 (VTDEEDEADEKDDSGATTMN) and 176-224 (ARKL…ERKR). Position 139 is a phosphothreonine (Thr-139). A compositionally biased stretch (basic and acidic residues) spans 176–211 (ARKLERDSLRDESQRKKEQDKLQRERDKLAKQERKE). Over residues 212–224 (KEKKRTQRGERKR) the composition is skewed to basic residues.

This sequence belongs to the CCDC43 family.

The polypeptide is Coiled-coil domain-containing protein 43 (CCDC43) (Homo sapiens (Human)).